The following is a 244-amino-acid chain: L-xylulose reductase (244 aa).

Met-1 is subject to N-acetylmethionine. 11–39 (LVTGAGKGIGRSTVLALKAAGAQVVAVSR) is an NADP(+) binding site. Position 21 is an omega-N-methylarginine (Arg-21). Ser-136 is a substrate binding site. Tyr-149 acts as the Proton acceptor in catalysis. Lys-153 is a catalytic residue.

Belongs to the short-chain dehydrogenases/reductases (SDR) family. In terms of assembly, homotetramer. As to expression, highly expressed in kidney, liver and epididymis. Expressed at intermediate level in lung. Weakly or not expressed in brain, heart, spleen and testis.

Its subcellular location is the membrane. It is found in the apical cell membrane. The catalysed reaction is xylitol + NADP(+) = L-xylulose + NADPH + H(+). Functionally, catalyzes the NADPH-dependent reduction of several pentoses, tetroses, trioses, alpha-dicarbonyl compounds and L-xylulose. Participates in the uronate cycle of glucose metabolism. May play a role in the water absorption and cellular osmoregulation in the proximal renal tubules by producing xylitol, an osmolyte, thereby preventing osmolytic stress from occurring in the renal tubules. The protein is L-xylulose reductase (Dcxr) of Mus musculus (Mouse).